The sequence spans 168 residues: Disulfide bond formation protein B (168 aa).

Topologically, residues 1-13 are cytoplasmic; it reads MFLTYFDAMPRRV. A helical transmembrane segment spans residues 14 to 30; the sequence is LALVSLACVALLAFGLY. Residues 31–48 are Periplasmic-facing; it reads LQHVVGLEPCPMCIVQRY. Cys-40 and Cys-43 are joined by a disulfide. Residues 49-64 form a helical membrane-spanning segment; that stretch reads ALVLVAVVAGITAVAK. The Cytoplasmic segment spans residues 65–70; the sequence is SRGLLI. A helical membrane pass occupies residues 71–88; the sequence is TGSGLLVLLSGFGAFVAA. Over 89–144 the chain is Periplasmic; that stretch reads RQSFLQWYPPEVASCGRDFYGMIETFPLKRAIPMIFKGSGDCTKIDWTFLGLSIAN. Cys-103 and Cys-130 are joined by a disulfide. The helical transmembrane segment at 145–163 threads the bilayer; sequence WSFLCFVAIALVGLVLITR. Over 164-168 the chain is Cytoplasmic; the sequence is LARQR.

It belongs to the DsbB family.

Its subcellular location is the cell inner membrane. In terms of biological role, required for disulfide bond formation in some periplasmic proteins. Acts by oxidizing the DsbA protein. The protein is Disulfide bond formation protein B of Polaromonas sp. (strain JS666 / ATCC BAA-500).